Here is a 278-residue protein sequence, read N- to C-terminus: Protein saf1 (278 aa).

3 disordered regions span residues 1–43 (MLSK…RNMS), 81–210 (KKNI…DIEE), and 240–264 (QKLA…EDKD). 2 stretches are compositionally biased toward basic and acidic residues: residues 22–38 (QIKV…ERLS) and 90–103 (GRVE…AERQ). 2 stretches are compositionally biased toward basic residues: residues 104 to 116 (HKPR…KNPK) and 169 to 183 (REKK…HHKK). Residues 186–202 (INASSAQPKSTTTTEAA) show a composition bias toward polar residues.

The protein localises to the nucleus. Its subcellular location is the nucleolus. The polypeptide is Protein saf1 (saf1) (Schizosaccharomyces pombe (strain 972 / ATCC 24843) (Fission yeast)).